Reading from the N-terminus, the 105-residue chain is uncharacterized protein (105 aa).

Positions 1 to 27 (MSLKSWHPQSKTKRVGASEGNPQWGSG) are disordered.

This is an uncharacterized protein from Homo sapiens (Human).